A 405-amino-acid polypeptide reads, in one-letter code: Acetate kinase (405 aa).

A Mg(2+)-binding site is contributed by Asn13. ATP is bound at residue Lys20. Position 94 (Arg94) interacts with substrate. The Proton donor/acceptor role is filled by Asp153. Residues 213-217, 288-290, and 336-340 contribute to the ATP site; these read HLGNG, DFR, and GIGEN. A Mg(2+)-binding site is contributed by Glu390.

The protein belongs to the acetokinase family. Homodimer. Requires Mg(2+) as cofactor. The cofactor is Mn(2+).

The protein resides in the cytoplasm. The catalysed reaction is acetate + ATP = acetyl phosphate + ADP. The protein operates within metabolic intermediate biosynthesis; acetyl-CoA biosynthesis; acetyl-CoA from acetate: step 1/2. Its function is as follows. Catalyzes the formation of acetyl phosphate from acetate and ATP. Can also catalyze the reverse reaction. The polypeptide is Acetate kinase (Buchnera aphidicola subsp. Acyrthosiphon pisum (strain APS) (Acyrthosiphon pisum symbiotic bacterium)).